Consider the following 180-residue polypeptide: ATP-dependent protease subunit HslV (180 aa).

The active site involves T7. Positions 163, 166, and 169 each coordinate Na(+).

The protein belongs to the peptidase T1B family. HslV subfamily. As to quaternary structure, a double ring-shaped homohexamer of HslV is capped on each side by a ring-shaped HslU homohexamer. The assembly of the HslU/HslV complex is dependent on binding of ATP.

The protein resides in the cytoplasm. The enzyme catalyses ATP-dependent cleavage of peptide bonds with broad specificity.. With respect to regulation, allosterically activated by HslU binding. In terms of biological role, protease subunit of a proteasome-like degradation complex believed to be a general protein degrading machinery. This chain is ATP-dependent protease subunit HslV, found in Alcanivorax borkumensis (strain ATCC 700651 / DSM 11573 / NCIMB 13689 / SK2).